A 140-amino-acid polypeptide reads, in one-letter code: HTH-type transcriptional regulator YfmP (140 aa).

An HTH merR-type domain is found at 1 to 73 (MEWMKIDQVA…LQELQHFMET (73 aa)). Positions 6 to 25 (IDQVAKRSGLTKRTIRFYEE) form a DNA-binding region, H-T-H motif.

Repressor of the yfmOP operon. A mutation in yfmP leads to overexpression of yfmO, probably causing a decrease in cellular copper that is eventually responsible for a reduced copper induction of copZA. The protein is HTH-type transcriptional regulator YfmP (yfmP) of Bacillus subtilis (strain 168).